A 354-amino-acid polypeptide reads, in one-letter code: MSGNTIGNVFRVTTWGESHGGAIGAVIDGCPPGLGLSEQHIQAALDRRKPGVGAFATPRQETDRIEILSGVFEGRTTGTPIALLIRNRDANSGAYDGLRNIFRPGHGDYTYFKKYGLRDHRGGGRASGRETAARVAAGAVAALVTAAAGIDVLAYTIALGGVSISESGTTVNRESLANPLCCPDQEAARRMTGRLEEARNAGDSLGGIVGIVVRGCPAGLGEPVFDKMDAQLAGALMSIGTVKGVEIGAGFAVAGMKGSESNDPLSPGGFLANASGGILAGITNGEQINMRVACKPIPSISRSQKTVDREGNPVTLSIGGRHDVCVIPRIIPVCEAMVQIVLADFLLRQKAVTL.

Residue Arg-48 coordinates NADP(+). FMN is bound by residues Arg-125 to Ser-127, Ala-280, Lys-295 to Ser-299, and Arg-321.

It belongs to the chorismate synthase family. In terms of assembly, homotetramer. FMNH2 serves as cofactor.

It carries out the reaction 5-O-(1-carboxyvinyl)-3-phosphoshikimate = chorismate + phosphate. It functions in the pathway metabolic intermediate biosynthesis; chorismate biosynthesis; chorismate from D-erythrose 4-phosphate and phosphoenolpyruvate: step 7/7. Its function is as follows. Catalyzes the anti-1,4-elimination of the C-3 phosphate and the C-6 proR hydrogen from 5-enolpyruvylshikimate-3-phosphate (EPSP) to yield chorismate, which is the branch point compound that serves as the starting substrate for the three terminal pathways of aromatic amino acid biosynthesis. This reaction introduces a second double bond into the aromatic ring system. The chain is Chorismate synthase from Syntrophus aciditrophicus (strain SB).